The chain runs to 276 residues: Large ribosomal subunit protein uL2 (276 aa).

Disordered stretches follow at residues 37–59 (QFQK…GGHK) and 225–276 (VMNP…RHKR). Residues 39–49 (QKSGRNNNGHI) show a composition bias toward polar residues. The span at 50-59 (TTRHKGGGHK) shows a compositional bias: basic residues.

It belongs to the universal ribosomal protein uL2 family. Part of the 50S ribosomal subunit. Forms a bridge to the 30S subunit in the 70S ribosome.

One of the primary rRNA binding proteins. Required for association of the 30S and 50S subunits to form the 70S ribosome, for tRNA binding and peptide bond formation. It has been suggested to have peptidyltransferase activity; this is somewhat controversial. Makes several contacts with the 16S rRNA in the 70S ribosome. This Cupriavidus pinatubonensis (strain JMP 134 / LMG 1197) (Cupriavidus necator (strain JMP 134)) protein is Large ribosomal subunit protein uL2.